Reading from the N-terminus, the 334-residue chain is Phosphatidylglycerol--prolipoprotein diacylglyceryl transferase (334 aa).

4 helical membrane passes run 22-42, 54-74, 105-125, and 131-151; these read FLPF…VVAA, AEPG…IIGA, IWEG…GVGI, and GLRF…AQAI. Arg153 lines the a 1,2-diacyl-sn-glycero-3-phospho-(1'-sn-glycerol) pocket. 2 consecutive transmembrane segments (helical) span residues 191–211 and 251–271; these read LFQP…FVIL and FLGI…GAII. The tract at residues 296–334 is disordered; that stretch reads PQAEVESGETDPEEILHADDDEERTGTHKPQATSLSGSN. Acidic residues predominate over residues 301-318; sequence ESGETDPEEILHADDDEE. A compositionally biased stretch (polar residues) spans 323–334; it reads HKPQATSLSGSN.

It belongs to the Lgt family.

Its subcellular location is the cell membrane. The enzyme catalyses L-cysteinyl-[prolipoprotein] + a 1,2-diacyl-sn-glycero-3-phospho-(1'-sn-glycerol) = an S-1,2-diacyl-sn-glyceryl-L-cysteinyl-[prolipoprotein] + sn-glycerol 1-phosphate + H(+). The protein operates within protein modification; lipoprotein biosynthesis (diacylglyceryl transfer). Functionally, catalyzes the transfer of the diacylglyceryl group from phosphatidylglycerol to the sulfhydryl group of the N-terminal cysteine of a prolipoprotein, the first step in the formation of mature lipoproteins. This is Phosphatidylglycerol--prolipoprotein diacylglyceryl transferase from Leifsonia xyli subsp. xyli (strain CTCB07).